Here is a 74-residue protein sequence, read N- to C-terminus: RNA-binding protein Hfq (74 aa).

The region spanning 9 to 69 (DQFLNQLRKE…ISTFMPQKNV (61 aa)) is the Sm domain.

Belongs to the Hfq family. Homohexamer.

Functionally, RNA chaperone that binds small regulatory RNA (sRNAs) and mRNAs to facilitate mRNA translational regulation in response to envelope stress, environmental stress and changes in metabolite concentrations. Also binds with high specificity to tRNAs. This Bacillus cytotoxicus (strain DSM 22905 / CIP 110041 / 391-98 / NVH 391-98) protein is RNA-binding protein Hfq.